A 93-amino-acid chain; its full sequence is Large ribosomal subunit protein uL23cz/uL23cy (93 aa).

It belongs to the universal ribosomal protein uL23 family. As to quaternary structure, part of the 50S ribosomal subunit.

It is found in the plastid. Its subcellular location is the chloroplast. Binds to 23S rRNA. The chain is Large ribosomal subunit protein uL23cz/uL23cy (rpl23-A) from Eucalyptus globulus subsp. globulus (Tasmanian blue gum).